The chain runs to 505 residues: Cytochrome P450 9b2 (505 aa).

Residue cysteine 449 participates in heme binding.

Belongs to the cytochrome P450 family. Heme serves as cofactor.

It localises to the endoplasmic reticulum membrane. It is found in the microsome membrane. Its function is as follows. May be involved in the metabolism of insect hormones and in the breakdown of synthetic insecticides. This chain is Cytochrome P450 9b2 (Cyp9b2), found in Drosophila melanogaster (Fruit fly).